Here is a 535-residue protein sequence, read N- to C-terminus: MAALLAAAAVRARILQVSSKVKSSPTWYSASSFSSSVPTVKLFIGGKFVESKSDKWIDIHNPATNEVIGRVPQATKAEMDAAIASCKRAFPAWADTSVLSRQQVLLRYQQLIKENLKEIAKLITLEQGKTLADAEGDVFRGLQVVEHACSVTSLMMGETMPSITKDMDLYSYRLPLGVCAGIAPFNFPAMIPLWMFPMAMVCGNTFLMKPSERVPGATMLLAKLLQDSGAPDGTLNIIHGQHEAVNFICDHPDIKAISFVGSNKAGEYIFERGSRHGKRVQANMGAKNHGVVMPDANKENTLNQLVGAAFGAAGQRCMALSTAVLVGEAKKWLPELVEHAKNLRVNAGDQPGADLGPLITPQAKERVCNLIDSGTKEGASILLDGRKIKVKGYENGNFVGPTIISNVKPNMTCYKEEIFGPVLVVLETETLDEAIQIVNNNPYGNGTAIFTTNGATARKYAHLVDVGQVGVNVPIPVPLPMFSFTGSRSSFRGDTNFYGKQGIQFYTQLKTITSQWKEEDATLSSPAVVMPTMGR.

The N-terminal 33 residues, 1–33, are a transit peptide targeting the mitochondrion; the sequence is MAALLAAAAVRARILQVSSKVKSSPTWYSASSF. Residues Lys-47, Lys-52, Lys-55, and Lys-76 each carry the N6-acetyllysine; alternate modification. N6-succinyllysine; alternate is present on residues Lys-47, Lys-52, Lys-55, and Lys-76. Lys-87 carries the N6-acetyllysine modification. N6-acetyllysine; alternate occurs at positions 117 and 129. N6-succinyllysine; alternate occurs at positions 117 and 129. 6 residues coordinate NAD(+): Ala-183, Phe-185, Lys-209, Glu-212, Arg-213, and Ser-262. Ser-262 bears the Phosphoserine mark. N6-acetyllysine is present on Lys-298. Cys-317 functions as the Nucleophile in the catalytic mechanism. 2 positions are modified to N6-acetyllysine: Lys-330 and Lys-331. N6-acetyllysine; alternate is present on residues Lys-364 and Lys-376. N6-succinyllysine; alternate occurs at positions 364 and 376. Ser-380 is subject to Phosphoserine. At Lys-391 the chain carries N6-succinyllysine. Glu-417 serves as a coordination point for NAD(+). The residue at position 500 (Lys-500) is an N6-acetyllysine. The residue at position 517 (Lys-517) is an N6-succinyllysine.

The protein belongs to the aldehyde dehydrogenase family. Homotetramer.

Its subcellular location is the mitochondrion. The enzyme catalyses 3-oxopropanoate + NAD(+) + CoA + H2O = hydrogencarbonate + acetyl-CoA + NADH + H(+). The catalysed reaction is 2-methyl-3-oxopropanoate + NAD(+) + CoA + H2O = propanoyl-CoA + hydrogencarbonate + NADH + H(+). It carries out the reaction (R)-2-methyl-3-oxopropanoate + NAD(+) + CoA + H2O = propanoyl-CoA + hydrogencarbonate + NADH + H(+). It catalyses the reaction (S)-2-methyl-3-oxopropanoate + NAD(+) + CoA + H2O = propanoyl-CoA + hydrogencarbonate + NADH + H(+). Functionally, malonate and methylmalonate semialdehyde dehydrogenase involved in the catabolism of valine, thymine, and compounds catabolized by way of beta-alanine, including uracil and cytidine. The chain is Methylmalonate-semialdehyde/malonate-semialdehyde dehydrogenase [acylating], mitochondrial from Homo sapiens (Human).